Reading from the N-terminus, the 221-residue chain is NAD(P)H-hydrate epimerase (221 aa).

One can recognise a YjeF N-terminal domain in the interval 10-210 (MQQIDNYTIE…DVGMLIPDDF (201 aa)). 58–62 (NNGAD) provides a ligand contact to (6S)-NADPHX. N59 and D120 together coordinate K(+). (6S)-NADPHX-binding positions include 124–130 (GVGLNNV) and D153. T156 serves as a coordination point for K(+).

This sequence belongs to the NnrE/AIBP family. K(+) serves as cofactor.

The enzyme catalyses (6R)-NADHX = (6S)-NADHX. It carries out the reaction (6R)-NADPHX = (6S)-NADPHX. Its function is as follows. Catalyzes the epimerization of the S- and R-forms of NAD(P)HX, a damaged form of NAD(P)H that is a result of enzymatic or heat-dependent hydration. This is a prerequisite for the S-specific NAD(P)H-hydrate dehydratase to allow the repair of both epimers of NAD(P)HX. The sequence is that of NAD(P)H-hydrate epimerase from Leuconostoc mesenteroides subsp. mesenteroides (strain ATCC 8293 / DSM 20343 / BCRC 11652 / CCM 1803 / JCM 6124 / NCDO 523 / NBRC 100496 / NCIMB 8023 / NCTC 12954 / NRRL B-1118 / 37Y).